Here is a 1304-residue protein sequence, read N- to C-terminus: Splicing factor 3B subunit 1 (1304 aa).

Disordered regions lie at residues 100 to 119 (QYDP…EDEY) and 124 to 148 (RTMI…PKMN). Residues 104 to 119 (FAEHRPPKIADREDEY) are compositionally biased toward basic and acidic residues. At Thr-125 the chain carries Phosphothreonine. A Phosphoserine modification is found at Ser-129. N6-acetyllysine is present on Lys-141. Position 142 is a phosphothreonine (Thr-142). Citrulline is present on Arg-157. The segment at 172-360 (LAEKAKAGEL…PVLTPGKTPI (189 aa)) is disordered. Phosphoserine is present on Ser-194. 3 positions are modified to phosphothreonine: Thr-203, Thr-207, and Thr-211. Residue Lys-214 is modified to N6-acetyllysine; alternate. Residue Lys-214 forms a Glycyl lysine isopeptide (Lys-Gly) (interchain with G-Cter in SUMO2); alternate linkage. Residues Thr-223 and Thr-227 each carry the phosphothreonine modification. The interval 223-491 (TPGHTPSLRW…VDESTLSPEE (269 aa)) is interaction with PPP1R8. Ser-229 is subject to Phosphoserine. The segment covering 231 to 241 (RWDETPGRAKG) has biased composition (basic and acidic residues). A phosphothreonine mark is found at Thr-235, Thr-244, Thr-248, Thr-257, Thr-261, Thr-267, Thr-273, and Thr-278. Phosphoserine is present on Ser-287. Residues 291–304 (NRWDETPKTERDTP) show a composition bias toward basic and acidic residues. 4 positions are modified to phosphothreonine: Thr-296, Thr-299, Thr-303, and Thr-313. Ser-322 is subject to Phosphoserine. Thr-326 and Thr-328 each carry phosphothreonine. Residue Ser-332 is modified to Phosphoserine. The residue at position 341 (Thr-341) is a Phosphothreonine. Residues 342 to 352 (PASQMGGSTPV) show a composition bias toward polar residues. A phosphoserine mark is found at Ser-344 and Ser-349. Residues Thr-350 and Thr-354 each carry the phosphothreonine modification. Phosphoserine is present on Ser-400. Lys-413 is covalently cross-linked (Glycyl lysine isopeptide (Lys-Gly) (interchain with G-Cter in SUMO2); alternate). Lys-413 participates in a covalent cross-link: Glycyl lysine isopeptide (Lys-Gly) (interchain with G-Cter in SUMO1); alternate. Thr-426 carries the phosphothreonine modification. Lys-430 is covalently cross-linked (Glycyl lysine isopeptide (Lys-Gly) (interchain with G-Cter in SUMO2)). Position 434 is a phosphothreonine; by DYRK1A (Thr-434). At Thr-436 the chain carries Phosphothreonine. Position 488 is a phosphoserine (Ser-488). HEAT repeat units lie at residues 529–568 (GPLF…DLVR), 569–603 (PYVH…LAKA), 604–641 (AGLA…ALGI), 643–677 (SLLP…LMGC), 680–718 (LPHL…AATP), 763–801 (NYYT…TDGV), 843–881 (KVGA…NLGA), 1010–1048 (TPPI…RGAE), 1052–1090 (AREW…AIGP), 1122–1160 (TCSP…YIGE), and 1163–1201 (KDYI…GVYG). Positions 547 to 550 (QERH) are interaction with PHF5A. 2 positions are modified to N6-acetyllysine: Lys-554 and Lys-562. The segment at 1156 to 1157 (EY) is interaction with PHF5A. The tract at residues 1248–1304 (QYCLQGLFHPARKVRDVYWKIYNSIYIGSQDALIAHYPRIYNDDKNTYIRYDLDYIL) is interaction with SF3B3 and SF3B5.

This sequence belongs to the SF3B1 family. As to quaternary structure, component of the 17S U2 SnRNP complex, a ribonucleoprotein complex that contains small nuclear RNA (snRNA) U2 and a number of specific proteins. Part of the SF3B subcomplex of the 17S U2 SnRNP complex. SF3B associates with the splicing subcomplex SF3A and a 12S RNA unit to form the U2 small nuclear ribonucleoproteins complex (U2 snRNP). Within the SF3B complex, interacts directly (via HEAT domain) with SF3B3, SF3B5, SF3B6 and (via HEAT domain) with PHF5A. The SF3B subcomplex interacts with U2AF2. Identified in the spliceosome C complex. Component of the minor (U12-type spliceosome) spliceosome. Within the minor spliceosome complex, interacts with SCNM1 and CRIPT. Component of the B-WICH complex, at least composed of SMARCA5/SNF2H, BAZ1B/WSTF, SF3B1, DEK, MYO1C, ERCC6, MYBBP1A and DDX21. Phosphorylated form interacts with PPP1R8. Interacts with PQBP1. Interacts with RBM17. Interacts with RBM39. Interacts with SETX. Interacts with RBM15. Interacts with USH1G. Interacts with SDE2. Interacts with U2AF1. Interacts with CACTIN. Interacts with ZRSR1. Interacts with CYREN. Post-translationally, phosphorylated. Phosphorylation occurs concomitantly with the splicing catalytic steps. Phosphorylation on Thr-244, Thr-248 and Thr-313 by cyclin-dependent kinases promotes interaction with PPP1R8 during mitosis. In terms of processing, citrullinated by PADI4. In terms of tissue distribution, ubiquitous.

The protein resides in the nucleus. It localises to the nucleus speckle. In terms of biological role, component of the 17S U2 SnRNP complex of the spliceosome, a large ribonucleoprotein complex that removes introns from transcribed pre-mRNAs. The 17S U2 SnRNP complex (1) directly participates in early spliceosome assembly and (2) mediates recognition of the intron branch site during pre-mRNA splicing by promoting the selection of the pre-mRNA branch-site adenosine, the nucleophile for the first step of splicing. Within the 17S U2 SnRNP complex, SF3B1 is part of the SF3B subcomplex, which is required for 'A' complex assembly formed by the stable binding of U2 snRNP to the branchpoint sequence in pre-mRNA. Sequence independent binding of SF3A and SF3B subcomplexes upstream of the branch site is essential, it may anchor U2 snRNP to the pre-mRNA. May also be involved in the assembly of the 'E' complex. Also acts as a component of the minor spliceosome, which is involved in the splicing of U12-type introns in pre-mRNAs. Together with other U2 snRNP complex components may also play a role in the selective processing of microRNAs (miRNAs) from the long primary miRNA transcript, pri-miR-17-92. The protein is Splicing factor 3B subunit 1 of Mus musculus (Mouse).